The primary structure comprises 493 residues: Acetylcholine receptor subunit beta-type unc-29 (493 aa).

A signal peptide spans 1–26 (MRTNRLSWILVLSVVIFLVIINTINA). N25 and N50 each carry an N-linked (GlcNAc...) asparagine glycan. Topologically, residues 27–232 (SDDEERLMVD…QVRIRRKTLF (206 aa)) are extracellular. Cysteines 155 and 169 form a disulfide. A run of 3 helical transmembrane segments spans residues 233–254 (YTVV…VFFL), 262–280 (ITLT…LLVS), and 296–317 (YLLL…IINV). The Cytoplasmic segment spans residues 318–445 (YFRGPRTHRM…WKYVAMIIDR (128 aa)). Residues 446-466 (LLLYVFFGITVGGTCGILFSA) traverse the membrane as a helical segment.

The protein belongs to the ligand-gated ion channel (TC 1.A.9) family. Acetylcholine receptor (TC 1.A.9.1) subfamily. Interacts with lev-1. Component of nicotinic acetylcholine receptor composed of 2 non-alpha subunits lev-1 and unc-29, and 3 alpha subunits unc-38, unc-63 and lev-8. Interacts with oig-4. Interacts with crld-1.

The protein localises to the postsynaptic cell membrane. It localises to the cell membrane. Its function is as follows. Non-alpha subunit of nicotinic acetylcholine receptor (nAChR). Involved in nAChR sensitivity to nicotine and levasimole. The chain is Acetylcholine receptor subunit beta-type unc-29 from Caenorhabditis elegans.